We begin with the raw amino-acid sequence, 148 residues long: Secretory phospholipase A2 (148 aa).

Positions 1–23 (MKLSVLLALGASSLAAAAPAATA) are cleaved as a signal peptide. N61 carries an N-linked (GlcNAc...) asparagine glycan. Residues C62 and C78 are joined by a disulfide bond. H81 is a catalytic residue. Residue D82 participates in Ca(2+) binding.

This sequence belongs to the phospholipase A2 family. Requires Ca(2+) as cofactor.

It is found in the secreted. It carries out the reaction a 1,2-diacyl-sn-glycero-3-phosphocholine + H2O = a 1-acyl-sn-glycero-3-phosphocholine + a fatty acid + H(+). Secretory phospholipase that catalyzes the calcium-dependent hydrolysis of the 2-acyl groups in 3-sn-phosphoglycerides. Increases the ability to utilize host-derived nutrients and lipids, and promotes lipid dropplets accumulation. Plays a role in virulence. The sequence is that of Secretory phospholipase A2 from Arthroderma benhamiae (strain ATCC MYA-4681 / CBS 112371) (Trichophyton mentagrophytes).